A 456-amino-acid polypeptide reads, in one-letter code: Phosphomethylpyrimidine synthase (456 aa).

Residues asparagine 80, methionine 109, tyrosine 139, histidine 175, 195–197 (SRG), 236–239 (DSLR), and glutamate 275 each bind substrate. Histidine 279 lines the Zn(2+) pocket. Tyrosine 302 contributes to the substrate binding site. Residue histidine 343 participates in Zn(2+) binding. Residues cysteine 423, cysteine 426, and cysteine 431 each contribute to the [4Fe-4S] cluster site.

The protein belongs to the ThiC family. Requires [4Fe-4S] cluster as cofactor.

It catalyses the reaction 5-amino-1-(5-phospho-beta-D-ribosyl)imidazole + S-adenosyl-L-methionine = 4-amino-2-methyl-5-(phosphooxymethyl)pyrimidine + CO + 5'-deoxyadenosine + formate + L-methionine + 3 H(+). It functions in the pathway cofactor biosynthesis; thiamine diphosphate biosynthesis. Its function is as follows. Catalyzes the synthesis of the hydroxymethylpyrimidine phosphate (HMP-P) moiety of thiamine from aminoimidazole ribotide (AIR) in a radical S-adenosyl-L-methionine (SAM)-dependent reaction. The protein is Phosphomethylpyrimidine synthase of Prochlorococcus marinus subsp. pastoris (strain CCMP1986 / NIES-2087 / MED4).